The sequence spans 358 residues: WAT1-related protein At3g28080 (358 aa).

Helical transmembrane passes span 12-32 (AVFLTAMLAGETSIVGLSTLF), 42-62 (IYPFLSYSYLLASLLLLPSLF), 81-101 (IGLLGFLGSMYVITGGIGIEY), 105-125 (TLASAIGNIVPALTFILAVIF), 137-157 (SVAKVMGTILSLIGAFVVIFY), 187-207 (WLIGGAILTIQGIFVSVSFIL), 219-239 (FTVSILYILCISIVTSMIGLV), 245-265 (PSIWIIHFDITLFTIVTTGII), 283-303 (LYLAIFKPLSILIAVVMGTIF), and 308-328 (LYLGCLIGGILITLGFYVVMW). Residues 27 to 155 (GLSTLFKVAT…LSLIGAFVVI (129 aa)) enclose the EamA domain.

It belongs to the drug/metabolite transporter (DMT) superfamily. Plant drug/metabolite exporter (P-DME) (TC 2.A.7.4) family.

The protein resides in the membrane. The polypeptide is WAT1-related protein At3g28080 (Arabidopsis thaliana (Mouse-ear cress)).